The following is a 640-amino-acid chain: Tyrosine--tRNA ligase, mitochondrial (640 aa).

L-tyrosine is bound at residue Tyr100. Asp104 contributes to the ATP binding site. Positions 105 to 114 (PTAPSLHIGH) match the 'HIGH' region motif. Asp144, Tyr248, Gln252, Asp255, and Gln274 together coordinate L-tyrosine. Positions 322–326 (KFGKS) match the 'KMSKS' region motif. Lys325 is a binding site for ATP.

This sequence belongs to the class-I aminoacyl-tRNA synthetase family.

The protein resides in the mitochondrion matrix. The catalysed reaction is tRNA(Tyr) + L-tyrosine + ATP = L-tyrosyl-tRNA(Tyr) + AMP + diphosphate + H(+). In terms of biological role, has both an aminoacyl-tRNA synthetase activity and is involved in the splicing of group I introns. This chain is Tyrosine--tRNA ligase, mitochondrial (YTS1), found in Podospora anserina (Pleurage anserina).